Here is a 293-residue protein sequence, read N- to C-terminus: MNAFDADITEHADSSGCHPLFRDVPATVEFNKLRKRLLRLTRQAIEDFAMVKPGDRWMVCLSGGKDSYGLLALLLDLKWRGLLPVELLAVNLDQGQPNFPKHILPDFLTRYGIEHRIEYQDTYSIVTDKLPETSTYCSLCSRLRRGNLYRIAREEGCSAIVLGHHREDILETFFMNLFHGGRLAAMPPKLLNDEGDLMVFRPLAYAAEDDLEKFANAMQFPIIPCDLCGSQDGLQRNAMKAMLIDIEKRMPGRKDTMIRALTNVRPSHLLDRKLFDFAGLMANGEKGSDDALW.

The PP-loop motif signature appears at 62–67 (SGGKDS). Residues Cys137, Cys140, and Cys228 each coordinate [4Fe-4S] cluster.

The protein belongs to the TtcA family. As to quaternary structure, homodimer. The cofactor is Mg(2+). [4Fe-4S] cluster serves as cofactor.

Its subcellular location is the cytoplasm. It catalyses the reaction cytidine(32) in tRNA + S-sulfanyl-L-cysteinyl-[cysteine desulfurase] + AH2 + ATP = 2-thiocytidine(32) in tRNA + L-cysteinyl-[cysteine desulfurase] + A + AMP + diphosphate + H(+). It functions in the pathway tRNA modification. Catalyzes the ATP-dependent 2-thiolation of cytidine in position 32 of tRNA, to form 2-thiocytidine (s(2)C32). The sulfur atoms are provided by the cysteine/cysteine desulfurase (IscS) system. This chain is tRNA-cytidine(32) 2-sulfurtransferase, found in Brucella abortus (strain S19).